Here is a 1131-residue protein sequence, read N- to C-terminus: MAKMKIHELAKELGVDNNVIVNFLQSKGSEVKSYRNNIEEKEIDLVRGKFKGSVSSNEPKSIDNGKASRVEKPEKNNSVTAKADQTPSEPVVHKQRPMTAQGERKNMSEQNVTTGSTESEDNIQSVGDRKYQHTDRRPQGNNGEGPQTSTNSGDRRPQGQGSYGDRRPQGQNSGDRRPYNGDRPQGQNSGDRRPYNGDRPQGQNSGDRRPYNGDRPQGQGNYGDRRPQGQNSGDRRPYNGDRPQGQGNYGDRRPQGQGSYGDRRPNSGDRPQGQGNYGDRRPQGQGSYGDRRPQGQGSYGDRPQGQGSYGDRPQGQGSYGDRRPQGQGSYGDRRPQGQGSYGDRPQGQGSYGDRRPQGQGSYGDRPQGQGNYGDRRPGGQGSYGDRRPQGQGSYGDRPQGQGNFGDRRPQGQGGYGGRPQGQGSYGGRPQGQGGYAGRSQGQGSFGGFNKDFDKDKDSGYTRSFDKKRTDPKSGEKSSIKSDLANELTKEQRAAAFNDKSRDRDRNRDRGRNNVEDGNIKSAKGKKDPNRKGAFIMPKPQQSLEKQDEIKTVIIPEVLTIKELADKMKVVPSVVVKKLFLAGKMVSINSEITFEEAEEIALGYEIIAEKEVLVNKVEELLKEDDEDENLMVKRPPVVCVMGHVDHGKTSLLDAIREANVTSREAGGITQHIGAYTVEVNGEKITFLDTPGHEAFTSMRMRGAKSTDIAILVVAADDGVMPQTVEAISHAKAAGVQIIVAINKIDKPSANIERVKQELTEHELIAEDWGGDTIFVPVSAHTKEGIDQLLEMIILTAEMGELKANPDRMARGIVIEAELDKGRGTVATILVQKGTLHVGDNIVIGSTYGKVRAMMDDKGRRVKEATPSTPVEILGLNAVPNAGEIFMATENEKEARNIADAFISQGKERLLADTKAKLSLDGLFSQIQAGNIKELNLIVKADVQGSVEAVKQSLVKLSNEEVAVRIIHGGVGAINESDVMLASTSNAIIIGFNVRPDNMAREIAEREKVDLRLYRVIYSAIEDVEAAMKGMLDPTFEEKVMGHAEVRQVFKASGLGTIAGSYVLDGKIVRGCSARITREGTQIFEGALASLKRFKDDVKEVNTGYECGLVFEKFNDIQEYDLVELYMMVEVPR.

Residues 49–542 (KFKGSVSSNE…AFIMPKPQQS (494 aa)) are disordered. Residues 60–75 (KSIDNGKASRVEKPEK) show a composition bias toward basic and acidic residues. Polar residues-rich tracts occupy residues 76-88 (NNSV…QTPS) and 108-125 (SEQN…NIQS). The segment covering 127-138 (GDRKYQHTDRRP) has biased composition (basic and acidic residues). The span at 139–152 (QGNNGEGPQTSTNS) shows a compositional bias: polar residues. 2 stretches are compositionally biased toward basic and acidic residues: residues 164–180 (GDRR…RPYN) and 223–239 (GDRR…RPYN). Gly residues predominate over residues 411 to 436 (GQGGYGGRPQGQGSYGGRPQGQGGYA). 2 stretches are compositionally biased toward basic and acidic residues: residues 450–479 (KDFD…KSSI) and 487–530 (LTKE…DPNR). The region spanning 632 to 801 (KRPPVVCVMG…ILTAEMGELK (170 aa)) is the tr-type G domain. The segment at 641–648 (GHVDHGKT) is G1. GTP is bound at residue 641-648 (GHVDHGKT). Residues 666–670 (GITQH) are G2. The tract at residues 687–690 (DTPG) is G3. Residues 687 to 691 (DTPGH) and 741 to 744 (NKID) contribute to the GTP site. Positions 741–744 (NKID) are G4. The segment at 777–779 (SAH) is G5.

Belongs to the TRAFAC class translation factor GTPase superfamily. Classic translation factor GTPase family. IF-2 subfamily.

Its subcellular location is the cytoplasm. Its function is as follows. One of the essential components for the initiation of protein synthesis. Protects formylmethionyl-tRNA from spontaneous hydrolysis and promotes its binding to the 30S ribosomal subunits. Also involved in the hydrolysis of GTP during the formation of the 70S ribosomal complex. This Lachnoclostridium phytofermentans (strain ATCC 700394 / DSM 18823 / ISDg) (Clostridium phytofermentans) protein is Translation initiation factor IF-2.